Here is a 183-residue protein sequence, read N- to C-terminus: Probable chorismate pyruvate-lyase (183 aa).

Residues R79, L115, and E168 each contribute to the substrate site.

This sequence belongs to the UbiC family.

Its subcellular location is the cytoplasm. It carries out the reaction chorismate = 4-hydroxybenzoate + pyruvate. It participates in cofactor biosynthesis; ubiquinone biosynthesis. Functionally, removes the pyruvyl group from chorismate, with concomitant aromatization of the ring, to provide 4-hydroxybenzoate (4HB) for the ubiquinone pathway. This Chromohalobacter salexigens (strain ATCC BAA-138 / DSM 3043 / CIP 106854 / NCIMB 13768 / 1H11) protein is Probable chorismate pyruvate-lyase.